A 198-amino-acid polypeptide reads, in one-letter code: Ribonuclease HII (198 aa).

In terms of domain architecture, RNase H type-2 spans 10 to 198; it reads QLVAGVDEVG…PVKRALGLAS (189 aa). Residues Asp16, Glu17, and Asp108 each contribute to the a divalent metal cation site.

It belongs to the RNase HII family. The cofactor is Mn(2+). Mg(2+) is required as a cofactor.

Its subcellular location is the cytoplasm. It carries out the reaction Endonucleolytic cleavage to 5'-phosphomonoester.. Its function is as follows. Endonuclease that specifically degrades the RNA of RNA-DNA hybrids. This chain is Ribonuclease HII, found in Escherichia coli O45:K1 (strain S88 / ExPEC).